The chain runs to 834 residues: Glycerol-3-phosphate acyltransferase (834 aa).

Residues 309–314 (CHRSHI) carry the HXXXXD motif motif.

The protein belongs to the GPAT/DAPAT family.

The protein localises to the cell inner membrane. The enzyme catalyses sn-glycerol 3-phosphate + an acyl-CoA = a 1-acyl-sn-glycero-3-phosphate + CoA. Its pathway is phospholipid metabolism; CDP-diacylglycerol biosynthesis; CDP-diacylglycerol from sn-glycerol 3-phosphate: step 1/3. This chain is Glycerol-3-phosphate acyltransferase, found in Pseudomonas fluorescens (strain Pf0-1).